We begin with the raw amino-acid sequence, 343 residues long: Anthranilate phosphoribosyltransferase (343 aa).

5-phospho-alpha-D-ribose 1-diphosphate contacts are provided by residues glycine 84, 87–88 (GD), threonine 92, 94–97 (NIST), 112–120 (KHGNRSASS), and serine 124. Glycine 84 contacts anthranilate. Serine 96 lines the Mg(2+) pocket. Asparagine 115 lines the anthranilate pocket. Arginine 170 is a binding site for anthranilate. 2 residues coordinate Mg(2+): aspartate 229 and glutamate 230.

This sequence belongs to the anthranilate phosphoribosyltransferase family. As to quaternary structure, homodimer. Mg(2+) is required as a cofactor.

It catalyses the reaction N-(5-phospho-beta-D-ribosyl)anthranilate + diphosphate = 5-phospho-alpha-D-ribose 1-diphosphate + anthranilate. The protein operates within amino-acid biosynthesis; L-tryptophan biosynthesis; L-tryptophan from chorismate: step 2/5. Its function is as follows. Catalyzes the transfer of the phosphoribosyl group of 5-phosphorylribose-1-pyrophosphate (PRPP) to anthranilate to yield N-(5'-phosphoribosyl)-anthranilate (PRA). The protein is Anthranilate phosphoribosyltransferase of Bordetella avium (strain 197N).